The following is a 58-amino-acid chain: INKDCLLPMDVGRCRARHPRYYYNSSSRRCEKFIYGGCRGNANNFITKKECEKVCGVR.

Residues 5 to 55 enclose the BPTI/Kunitz inhibitor domain; that stretch reads CLLPMDVGRCRARHPRYYYNSSSRRCEKFIYGGCRGNANNFITKKECEKVC. Intrachain disulfides connect C5-C55, C14-C38, and C30-C51.

The protein belongs to the venom Kunitz-type family. Sea anemone type 2 potassium channel toxin subfamily.

The protein localises to the secreted. It is found in the nematocyst. Its function is as follows. Dual-function toxin that inhibits both the serine protease trypsin (Kd&lt;30 nM) and voltage-gated potassium channels Kv1.2/KCNA2 (IC(50)=1100 nM). The protein is KappaPI-actitoxin-Avd3c of Anemonia sulcata (Mediterranean snakelocks sea anemone).